Consider the following 244-residue polypeptide: Transcriptional activator protein CarR (244 aa).

The 66-residue stretch at 162-227 folds into the HTH luxR-type domain; it reads DNSRNALLSP…HAITKALELN (66 aa). A DNA-binding region (H-T-H motif) is located at residues 186–205; the sequence is YKEVSRILGISEVTVKFHIN.

The protein belongs to the autoinducer-regulated transcriptional regulatory protein family.

Its function is as follows. Functions as an OHLL responsive transcriptional regulator which acts in the control of the biosynthesis of carbapenem antibiotics. This Pectobacterium carotovorum subsp. carotovorum (Erwinia carotovora subsp. carotovora) protein is Transcriptional activator protein CarR (carR).